The following is a 394-amino-acid chain: Cytochrome b561 and DOMON domain-containing protein At4g12980 (394 aa).

Positions 1-24 (MDSSYLRISLSFLFWALLLSPAVS) are cleaved as a signal peptide. The DOMON domain maps to 49-169 (LKAILHYSYD…GKVNQVWQVG (121 aa)). Positions 184 to 381 (GPNLNSVGSL…LEVVTWVIVL (198 aa)) constitute a Cytochrome b561 domain. 2 consecutive transmembrane segments (helical) span residues 220-240 (IHGI…AMIA) and 252-272 (AWFY…VAGW). Heme b is bound by residues His-221, His-257, and His-290. A helical membrane pass occupies residues 292–312 (NIGICLFSIATLQMFAMLLRP). His-326 contributes to the heme b binding site. Transmembrane regions (helical) follow at residues 328–348 (GVGY…LSIL) and 361–381 (VIGT…VIVL).

Heme b is required as a cofactor.

The protein localises to the membrane. In terms of biological role, may act as a catecholamine-responsive trans-membrane electron transporter. The polypeptide is Cytochrome b561 and DOMON domain-containing protein At4g12980 (Arabidopsis thaliana (Mouse-ear cress)).